A 300-amino-acid polypeptide reads, in one-letter code: MAATRVLTAATAVTQTTSCFLAKQAFTLPAKKSCGGFGGLCFSRRALVLKSKRPFSCSAIYNPQVKVQEEGPAESLDYRVFFLDGSGKKVSPWHDIPLTLGDGVFNFIVEIPKESKAKMEVATDEDFTPIKQDTKKGKLRYYPYNINWNYGLLPQTWEDPSHANSEVEGCFGDNDPVDVVEIGETQRKIGDILKIKPLAALAMIDEGELDWKIVAISLDDPKAHLVNDVEDVEKHFPGTLTAIRDWFRDYKIPDGKPANRFGLGDKPANKDYALKIIQETNESWAKLVKRSVDAGDLSLY.

The N-terminal 66 residues, Met-1 to Lys-66, are a transit peptide targeting the chloroplast. Arg-140 serves as a coordination point for diphosphate. Tyr-142 functions as the Proton donor in the catalytic mechanism. 3 residues coordinate Mg(2+): Asp-173, Asp-178, and Asp-210.

The protein belongs to the PPase family. It depends on Mg(2+) as a cofactor. In terms of tissue distribution, expressed in all tissues tested. Highest expression in flowers, leaves and roots. Lower levels of expression in siliques, stems, ovary, stigma and pollen.

Its subcellular location is the plastid. The protein localises to the chloroplast stroma. It carries out the reaction diphosphate + H2O = 2 phosphate + H(+). With respect to regulation, inhibited by NaF. This Arabidopsis thaliana (Mouse-ear cress) protein is Soluble inorganic pyrophosphatase 6, chloroplastic.